Consider the following 1373-residue polypeptide: DNA-directed RNA polymerase subunit beta (1373 aa).

It belongs to the RNA polymerase beta chain family. The RNAP catalytic core consists of 2 alpha, 1 beta, 1 beta' and 1 omega subunit. When a sigma factor is associated with the core the holoenzyme is formed, which can initiate transcription.

It catalyses the reaction RNA(n) + a ribonucleoside 5'-triphosphate = RNA(n+1) + diphosphate. Its function is as follows. DNA-dependent RNA polymerase catalyzes the transcription of DNA into RNA using the four ribonucleoside triphosphates as substrates. In Rickettsia felis (strain ATCC VR-1525 / URRWXCal2) (Rickettsia azadi), this protein is DNA-directed RNA polymerase subunit beta.